Here is a 255-residue protein sequence, read N- to C-terminus: EEF1A lysine methyltransferase 4 (255 aa).

S-adenosyl-L-methionine is bound by residues W26 and Y30. Y39 carries the post-translational modification Phosphotyrosine. S-adenosyl-L-methionine is bound by residues W41, G66, 88 to 89 (DY), 113 to 114 (DV), and K130. The Required for methyltransferase activity signature appears at 129–134 (EKGTLD).

The protein belongs to the methyltransferase superfamily.

It carries out the reaction L-lysyl-[protein] + S-adenosyl-L-methionine = N(6)-methyl-L-lysyl-[protein] + S-adenosyl-L-homocysteine + H(+). The catalysed reaction is N(6)-methyl-L-lysyl-[protein] + S-adenosyl-L-methionine = N(6),N(6)-dimethyl-L-lysyl-[protein] + S-adenosyl-L-homocysteine + H(+). The enzyme catalyses N(6),N(6)-dimethyl-L-lysyl-[protein] + S-adenosyl-L-methionine = N(6),N(6),N(6)-trimethyl-L-lysyl-[protein] + S-adenosyl-L-homocysteine + H(+). In terms of biological role, protein-lysine methyltransferase that efficiently catalyzes three successive methylations on 'Lys-36' in eukaryotic translation elongation factor 1 alpha (EEF1A1 or EEF1A2). In Bos taurus (Bovine), this protein is EEF1A lysine methyltransferase 4.